Reading from the N-terminus, the 520-residue chain is Maturase K (520 aa).

This sequence belongs to the intron maturase 2 family. MatK subfamily.

It is found in the plastid. The protein localises to the chloroplast. Its function is as follows. Usually encoded in the trnK tRNA gene intron. Probably assists in splicing its own and other chloroplast group II introns. In Cycas taitungensis (Prince sago), this protein is Maturase K.